We begin with the raw amino-acid sequence, 280 residues long: Putative ABC transporter ATP-binding protein PYRAB03730 (280 aa).

The ABC transporter domain maps to 4–244 (IEVENVSFKY…VEFLERIGIR (241 aa)). An ATP-binding site is contributed by 38 to 45 (GPSGSGKS).

The protein belongs to the ABC transporter superfamily.

It localises to the cell membrane. Its function is as follows. Probably part of an ABC transporter complex. Responsible for energy coupling to the transport system. This chain is Putative ABC transporter ATP-binding protein PYRAB03730, found in Pyrococcus abyssi (strain GE5 / Orsay).